The chain runs to 199 residues: Imidazoleglycerol-phosphate dehydratase (199 aa).

Belongs to the imidazoleglycerol-phosphate dehydratase family.

It is found in the cytoplasm. It carries out the reaction D-erythro-1-(imidazol-4-yl)glycerol 3-phosphate = 3-(imidazol-4-yl)-2-oxopropyl phosphate + H2O. It participates in amino-acid biosynthesis; L-histidine biosynthesis; L-histidine from 5-phospho-alpha-D-ribose 1-diphosphate: step 6/9. The protein is Imidazoleglycerol-phosphate dehydratase of Lactococcus lactis subsp. cremoris (strain MG1363).